Here is a 320-residue protein sequence, read N- to C-terminus: Protein MRH1 (320 aa).

Over 1 to 34 the chain is Extracellular; it reads MSTFETLIKRGGNEAIKINPPTGADFHITSRGSD. Residues 35 to 55 form a helical membrane-spanning segment; that stretch reads WFWTCFCCYLLFGLILTFLMF. At 56–62 the chain is on the cytoplasmic side; that stretch reads RKPVNDR. A helical transmembrane segment spans residues 63-83; sequence FFYLTGIAPNFFMCIAYFTMA. At 84-116 the chain is on the extracellular side; that stretch reads SNLGWIPVKAKYNHVQTSTQKEHPGYRQIFYSR. A helical membrane pass occupies residues 117 to 137; it reads FVGWFLALPWPIIQICMLAGT. Topologically, residues 138–141 are cytoplasmic; it reads PFWQ. Residues 142-162 traverse the membrane as a helical segment; sequence MAFNVCITEFFTVCWLIAACV. At 163–167 the chain is on the extracellular side; the sequence is HSTYK. A helical transmembrane segment spans residues 168–188; it reads WGYYTIGLGAAIVVSISVMTT. The Cytoplasmic segment spans residues 189–204; the sequence is SYNLVKQRDNDIRLTF. Residues 205-225 form a helical membrane-spanning segment; it reads LVFFSIIMFLWIIAYPTCFGI. Over 226–238 the chain is Extracellular; it reads TDGGNVLQPDSAG. The helical transmembrane segment at 239–259 threads the bilayer; that stretch reads IFYGIIDLILMCFIPTLLVPI. Over 260 to 320 the chain is Cytoplasmic; that stretch reads ANHFGADKLG…KSKKSKKSEE (61 aa). The interval 285–320 is disordered; sequence APVASPRPAATPNLSKDKKKKSKKSKKSKKSKKSEE. Position 289 is a phosphoserine (Ser-289). Thr-295 carries the phosphothreonine modification. Ser-299 carries the post-translational modification Phosphoserine. Positions 301-320 are enriched in basic residues; the sequence is DKKKKSKKSKKSKKSKKSEE.

It belongs to the archaeal/bacterial/fungal opsin family.

The protein localises to the cell membrane. It localises to the mitochondrion. It is found in the bud. The protein is Protein MRH1 (MRH1) of Saccharomyces cerevisiae (strain ATCC 204508 / S288c) (Baker's yeast).